A 959-amino-acid polypeptide reads, in one-letter code: Protein moonraker (959 aa).

Positions 124-156 (LPHSSHKGMHTKVERKDSKSQDVCHCSHQPSRV) are disordered. Basic and acidic residues predominate over residues 134–145 (TKVERKDSKSQD). A Phosphoserine modification is found at Ser-279. Over residues 456–470 (EEAPRIEDNGTDFKD) the composition is skewed to basic and acidic residues. Disordered stretches follow at residues 456–560 (EEAP…ASPK) and 572–610 (RDAAKEQSLQQEDIHKESQLRGDAEQEAARLSWPDAESS). Polar residues predominate over residues 515 to 533 (PNQPYSKSRLQQTTVSSRL). Residues 547-558 (WIPPNPTSPPAS) are compositionally biased toward pro residues. Residues 582 to 674 (QEDIHKESQL…TQLADKVEEA (93 aa)) adopt a coiled-coil conformation. The span at 583-599 (EDIHKESQLRGDAEQEA) shows a compositional bias: basic and acidic residues. Ser-691 carries the phosphoserine modification. 2 disordered regions span residues 692 to 721 (SVEANSHLKDRPSRHAAAAAQPAEQASDVP) and 848 to 883 (LDESVTTEEGSEKREAPLPLSREDLHQRKGQTPLSV). Residues 707–717 (AAAAAQPAEQA) show a composition bias toward low complexity. Residues 857–874 (GSEKREAPLPLSREDLHQ) are compositionally biased toward basic and acidic residues. The interval 877-959 (GQTPLSVPPR…FTSEFLEAAA (83 aa)) is necessary and sufficient for CEP20-binding.

In terms of assembly, interacts with CEP63 and WDR62. Forms a complex with OFD1 and CEP20/FOR20. Interacts with PCM1.

Its subcellular location is the cytoplasm. The protein resides in the cytoskeleton. The protein localises to the microtubule organizing center. It is found in the centrosome. It localises to the centriolar satellite. Involved in centriole duplication. Positively regulates CEP63 centrosomal localization. Required for WDR62 centrosomal localization and promotes the centrosomal localization of CDK2. May play a role in cilium assembly. This is Protein moonraker (Kiaa0753) from Mus musculus (Mouse).